Here is a 145-residue protein sequence, read N- to C-terminus: MGIGCWRNPLLLLIALVLSAKLGHFQRWEGFQQKLMSKKNMNSTLNFFIQSYNNASNDTYLYRVQRLIRSQMQLTTGVEYIVTVKIGWTKCKRNDTSNSSCPLQSKKLRKSLICESLIYTMPWINYFQLWNNSCLEAEHVGRNLR.

A signal peptide spans 1-19 (MGIGCWRNPLLLLIALVLS). The Cystatin domain occupies 37-115 (SKKNMNSTLN…KKLRKSLICE (79 aa)). The N-linked (GlcNAc...) asparagine glycan is linked to asparagine 42. 2 cysteine pairs are disulfide-bonded: cysteine 91/cysteine 101 and cysteine 114/cysteine 134.

Belongs to the cystatin family.

The protein localises to the secreted. The chain is Cystatin-like 1 (CSTL1) from Homo sapiens (Human).